Reading from the N-terminus, the 224-residue chain is Transcriptional regulatory protein CiaR (224 aa).

A Response regulatory domain is found at 3–116; it reads KILLVEDDLG…ELKMRIQALL (114 aa). Asp-51 is modified (4-aspartylphosphate). The ompR/PhoB-type DNA-binding region spans 124–222; that stretch reads ENTLTYGNIV…LRSVGYLLKD (99 aa).

In terms of processing, phosphorylated by CiaH.

The protein resides in the cytoplasm. Functionally, member of the two-component regulatory system CiaH/CiaR. Involved in early steps of competence regulation and in penicillin susceptibility. The chain is Transcriptional regulatory protein CiaR (ciaR) from Streptococcus pneumoniae (strain ATCC BAA-255 / R6).